The chain runs to 518 residues: Membrane-bound lytic murein transglycosylase F (518 aa).

The signal sequence occupies residues 1 to 21; it reads MKKLKINYLFIGILALLLAVA. The non-LT domain stretch occupies residues 22-269; that stretch reads LWPSIPWFGK…RIEEKYLGHG (248 aa). The LT domain stretch occupies residues 270–518; it reads DDFDYVDTRT…SRKGSEEKQN (249 aa). Glu-314 is a catalytic residue.

The protein in the N-terminal section; belongs to the bacterial solute-binding protein 3 family. This sequence in the C-terminal section; belongs to the transglycosylase Slt family.

It localises to the cell outer membrane. The enzyme catalyses Exolytic cleavage of the (1-&gt;4)-beta-glycosidic linkage between N-acetylmuramic acid (MurNAc) and N-acetylglucosamine (GlcNAc) residues in peptidoglycan, from either the reducing or the non-reducing ends of the peptidoglycan chains, with concomitant formation of a 1,6-anhydrobond in the MurNAc residue.. Its function is as follows. Murein-degrading enzyme that degrades murein glycan strands and insoluble, high-molecular weight murein sacculi, with the concomitant formation of a 1,6-anhydromuramoyl product. Lytic transglycosylases (LTs) play an integral role in the metabolism of the peptidoglycan (PG) sacculus. Their lytic action creates space within the PG sacculus to allow for its expansion as well as for the insertion of various structures such as secretion systems and flagella. This is Membrane-bound lytic murein transglycosylase F from Escherichia coli O6:H1 (strain CFT073 / ATCC 700928 / UPEC).